The primary structure comprises 169 residues: Photosystem I assembly protein Ycf3 (169 aa).

3 TPR repeats span residues 36 to 69, 73 to 106, and 121 to 154; these read AFTY…EIDP, SYIL…NPFL, and GEQA…TPGN.

The protein belongs to the Ycf3 family.

Its subcellular location is the plastid. The protein resides in the chloroplast thylakoid membrane. Its function is as follows. Essential for the assembly of the photosystem I (PSI) complex. May act as a chaperone-like factor to guide the assembly of the PSI subunits. This is Photosystem I assembly protein Ycf3 from Cucumis sativus (Cucumber).